Reading from the N-terminus, the 664-residue chain is Intraflagellar transport protein 70B (664 aa).

TPR repeat units lie at residues 11–44, 45–78, 153–186, 188–220, 385–418, 423–456, and 458–491; these read DGEF…SPRS, RAGL…HPEL, LDGQ…SGYR, DLSY…GIRQ, LTEQ…YEDT, IPVL…CNDH, and VWKL…HYDN. The stretch at 509–532 forms a coiled coil; sequence MISQNEEAEELMRKIGKEEEQLSY. A TPR 8 repeat occupies 543–576; the sequence is CIVNLVIGTLYCAKGNYDFGISRVIKSLEPCNKK.

This sequence belongs to the TTC30/dfy-1/fleer family. In terms of assembly, interacts with the IFT B complex components IFT27, IFT46, IFT74, IFT52, IFT57, IFT80, IFT81 and IFT88. Interacts with KIF17.

The protein localises to the cell projection. Its subcellular location is the cilium. Required for polyglutamylation of axonemal tubulin. Plays a role in anterograde intraflagellar transport (IFT), the process by which cilia precursors are transported from the base of the cilium to the site of their incorporation at the tip. The protein is Intraflagellar transport protein 70B (IFT70B) of Bos taurus (Bovine).